The primary structure comprises 94 residues: Phosphoribosyl-ATP pyrophosphatase (94 aa).

Belongs to the PRA-PH family.

It is found in the cytoplasm. The catalysed reaction is 1-(5-phospho-beta-D-ribosyl)-ATP + H2O = 1-(5-phospho-beta-D-ribosyl)-5'-AMP + diphosphate + H(+). Its pathway is amino-acid biosynthesis; L-histidine biosynthesis; L-histidine from 5-phospho-alpha-D-ribose 1-diphosphate: step 2/9. This Saccharolobus islandicus (strain Y.N.15.51 / Yellowstone #2) (Sulfolobus islandicus) protein is Phosphoribosyl-ATP pyrophosphatase.